The following is a 203-amino-acid chain: Histidine biosynthesis bifunctional protein HisIE (203 aa).

A phosphoribosyl-AMP cyclohydrolase region spans residues Met-1–Phe-108. The segment at Leu-109–His-203 is phosphoribosyl-ATP pyrophosphohydrolase.

In the N-terminal section; belongs to the PRA-CH family. The protein in the C-terminal section; belongs to the PRA-PH family.

The protein resides in the cytoplasm. It catalyses the reaction 1-(5-phospho-beta-D-ribosyl)-ATP + H2O = 1-(5-phospho-beta-D-ribosyl)-5'-AMP + diphosphate + H(+). The catalysed reaction is 1-(5-phospho-beta-D-ribosyl)-5'-AMP + H2O = 1-(5-phospho-beta-D-ribosyl)-5-[(5-phospho-beta-D-ribosylamino)methylideneamino]imidazole-4-carboxamide. The protein operates within amino-acid biosynthesis; L-histidine biosynthesis; L-histidine from 5-phospho-alpha-D-ribose 1-diphosphate: step 2/9. Its pathway is amino-acid biosynthesis; L-histidine biosynthesis; L-histidine from 5-phospho-alpha-D-ribose 1-diphosphate: step 3/9. The sequence is that of Histidine biosynthesis bifunctional protein HisIE from Bacteroides thetaiotaomicron (strain ATCC 29148 / DSM 2079 / JCM 5827 / CCUG 10774 / NCTC 10582 / VPI-5482 / E50).